A 245-amino-acid chain; its full sequence is Protein-L-isoaspartate O-methyltransferase 1 (245 aa).

Ser-76 is an active-site residue.

This sequence belongs to the methyltransferase superfamily. L-isoaspartyl/D-aspartyl protein methyltransferase family.

It localises to the cytoplasm. It carries out the reaction [protein]-L-isoaspartate + S-adenosyl-L-methionine = [protein]-L-isoaspartate alpha-methyl ester + S-adenosyl-L-homocysteine. Functionally, catalyzes the methyl esterification of L-isoaspartyl residues in peptides and proteins that result from spontaneous decomposition of normal L-aspartyl and L-asparaginyl residues. It plays a role in the repair and/or degradation of damaged proteins. This chain is Protein-L-isoaspartate O-methyltransferase 1, found in Rhodopseudomonas palustris (strain HaA2).